The primary structure comprises 361 residues: Chorismate synthase (361 aa).

The NADP(+) site is built by R48 and R54. FMN-binding positions include 125 to 127, 238 to 239, G278, 293 to 297, and R319; these read RSS, NA, and KPTSS.

The protein belongs to the chorismate synthase family. As to quaternary structure, homotetramer. FMNH2 is required as a cofactor.

It carries out the reaction 5-O-(1-carboxyvinyl)-3-phosphoshikimate = chorismate + phosphate. Its pathway is metabolic intermediate biosynthesis; chorismate biosynthesis; chorismate from D-erythrose 4-phosphate and phosphoenolpyruvate: step 7/7. Its function is as follows. Catalyzes the anti-1,4-elimination of the C-3 phosphate and the C-6 proR hydrogen from 5-enolpyruvylshikimate-3-phosphate (EPSP) to yield chorismate, which is the branch point compound that serves as the starting substrate for the three terminal pathways of aromatic amino acid biosynthesis. This reaction introduces a second double bond into the aromatic ring system. The sequence is that of Chorismate synthase from Vibrio vulnificus (strain CMCP6).